Consider the following 687-residue polypeptide: MSVRYPLLNRELGILGFNERVLAQAADPQVPLLERLRFICITSSNLDEFFEVRMAGLQEQIRDNPGALTPDGMSLQHAYDLVVERAQRLVHRQYTMLHETVLPALEQEGIYFHASDSWNDEQLEWARRYFLDELLPVLTPIGLDPAHPFPRVLNKSLNFVVELEGRDAFGRQAVMGIVQAPRALPRVVRMPHALSGFEHGFVLLSSFMQRFVGELFPQLVVKSCNQFRITRNSELFVDEDEITNLRVALQGELPARHLGNAVRLEVSADTPLHIVRRLLEESELGDKDCYRVAGSVNLVRLMQIPDLVDRPDLKFTPFTASTPAVIANAPTMFDAIDAGDILLHHPYESFQPVLELLQQAARDPSVVAIKQTIYRTGTDSPLMDALMEAARNGKEVTVVVELLARFDEETNINWASQLEAVGAHVVYGVVGHKCHAKMMLIVRRVVQAGKASLRRYVHLGTGNYHPRTARLYTDFGLMTADQKICEDVHHVFQQLTGIGGELTLHELWQSPFTLHPRIIESIRAEIDNAQAGKRARIVAKMNALLEPSVIAALYEASQAGVKVDLIVRGVCALKPGVPGLSENITVRSIVGRFLEHHRIYYFHAGGAEDVYLSSADWMDRNLFRRVEVAFPIRERKLKRRVIAEGLSVCLGDNQSAWQMHSDGHYRRRRTGKTIRNAQLGLLAKFCS.

Residue Asn-45 participates in ATP binding. Residues Arg-375 and Arg-405 each coordinate Mg(2+). His-435 serves as the catalytic Phosphohistidine intermediate. 3 residues coordinate ATP: Tyr-472, Arg-568, and His-596.

Belongs to the polyphosphate kinase 1 (PPK1) family. The cofactor is Mg(2+). Post-translationally, an intermediate of this reaction is the autophosphorylated ppk in which a phosphate is covalently linked to a histidine residue through a N-P bond.

The enzyme catalyses [phosphate](n) + ATP = [phosphate](n+1) + ADP. Catalyzes the reversible transfer of the terminal phosphate of ATP to form a long-chain polyphosphate (polyP). In Burkholderia cenocepacia (strain HI2424), this protein is Polyphosphate kinase.